The sequence spans 484 residues: Probable cytosol aminopeptidase (484 aa).

Lysine 256 and aspartate 261 together coordinate Mn(2+). The active site involves lysine 268. Residues aspartate 279, aspartate 338, and glutamate 340 each contribute to the Mn(2+) site. Arginine 342 is an active-site residue.

It belongs to the peptidase M17 family. Mn(2+) serves as cofactor.

It localises to the cytoplasm. The catalysed reaction is Release of an N-terminal amino acid, Xaa-|-Yaa-, in which Xaa is preferably Leu, but may be other amino acids including Pro although not Arg or Lys, and Yaa may be Pro. Amino acid amides and methyl esters are also readily hydrolyzed, but rates on arylamides are exceedingly low.. It catalyses the reaction Release of an N-terminal amino acid, preferentially leucine, but not glutamic or aspartic acids.. In terms of biological role, presumably involved in the processing and regular turnover of intracellular proteins. Catalyzes the removal of unsubstituted N-terminal amino acids from various peptides. This chain is Probable cytosol aminopeptidase, found in Actinobacillus succinogenes (strain ATCC 55618 / DSM 22257 / CCUG 43843 / 130Z).